The primary structure comprises 198 residues: Putative Do-like 15 protein (198 aa).

Positions lysine 48 to lysine 198 are serine protease. Catalysis depends on charge relay system residues histidine 86 and serine 175.

It belongs to the peptidase S1B family.

In Arabidopsis thaliana (Mouse-ear cress), this protein is Putative Do-like 15 protein (DEGP15).